The following is a 246-amino-acid chain: 2,3-bisphosphoglycerate-dependent phosphoglycerate mutase (246 aa).

Substrate-binding positions include 9-16, 22-23, Arg-61, 88-91, Lys-99, 115-116, and 181-182; these read RHGQSAWN, TG, ERHY, RR, and GN. His-10 functions as the Tele-phosphohistidine intermediate in the catalytic mechanism. Residue Glu-88 is the Proton donor/acceptor of the active site.

The protein belongs to the phosphoglycerate mutase family. BPG-dependent PGAM subfamily.

It carries out the reaction (2R)-2-phosphoglycerate = (2R)-3-phosphoglycerate. It participates in carbohydrate degradation; glycolysis; pyruvate from D-glyceraldehyde 3-phosphate: step 3/5. Catalyzes the interconversion of 2-phosphoglycerate and 3-phosphoglycerate. In Bifidobacterium longum (strain DJO10A), this protein is 2,3-bisphosphoglycerate-dependent phosphoglycerate mutase.